The following is a 420-amino-acid chain: uncharacterized protein (420 aa).

A TRAM domain is found at N7–S65. S-adenosyl-L-methionine is bound by residues Q245, Y280, E304, and D349. C376 serves as the catalytic Nucleophile.

It belongs to the class I-like SAM-binding methyltransferase superfamily. RNA M5U methyltransferase family.

This is an uncharacterized protein from Corynebacterium diphtheriae (strain ATCC 700971 / NCTC 13129 / Biotype gravis).